Consider the following 204-residue polypeptide: Leucyl/phenylalanyl-tRNA--protein transferase (204 aa).

This sequence belongs to the L/F-transferase family.

It localises to the cytoplasm. The enzyme catalyses N-terminal L-lysyl-[protein] + L-leucyl-tRNA(Leu) = N-terminal L-leucyl-L-lysyl-[protein] + tRNA(Leu) + H(+). It catalyses the reaction N-terminal L-arginyl-[protein] + L-leucyl-tRNA(Leu) = N-terminal L-leucyl-L-arginyl-[protein] + tRNA(Leu) + H(+). The catalysed reaction is L-phenylalanyl-tRNA(Phe) + an N-terminal L-alpha-aminoacyl-[protein] = an N-terminal L-phenylalanyl-L-alpha-aminoacyl-[protein] + tRNA(Phe). Functionally, functions in the N-end rule pathway of protein degradation where it conjugates Leu, Phe and, less efficiently, Met from aminoacyl-tRNAs to the N-termini of proteins containing an N-terminal arginine or lysine. The protein is Leucyl/phenylalanyl-tRNA--protein transferase of Rhizobium leguminosarum bv. trifolii (strain WSM2304).